A 260-amino-acid chain; its full sequence is 3-methyl-2-oxobutanoate hydroxymethyltransferase (260 aa).

Mg(2+) is bound by residues aspartate 42 and aspartate 81. 3-methyl-2-oxobutanoate is bound by residues 42–43 (DS), aspartate 81, and lysine 109. Glutamate 111 is a Mg(2+) binding site. Catalysis depends on glutamate 178, which acts as the Proton acceptor.

It belongs to the PanB family. Homodecamer; pentamer of dimers. It depends on Mg(2+) as a cofactor.

It localises to the cytoplasm. It catalyses the reaction 3-methyl-2-oxobutanoate + (6R)-5,10-methylene-5,6,7,8-tetrahydrofolate + H2O = 2-dehydropantoate + (6S)-5,6,7,8-tetrahydrofolate. It functions in the pathway cofactor biosynthesis; (R)-pantothenate biosynthesis; (R)-pantoate from 3-methyl-2-oxobutanoate: step 1/2. Its function is as follows. Catalyzes the reversible reaction in which hydroxymethyl group from 5,10-methylenetetrahydrofolate is transferred onto alpha-ketoisovalerate to form ketopantoate. This chain is 3-methyl-2-oxobutanoate hydroxymethyltransferase, found in Ruthia magnifica subsp. Calyptogena magnifica.